Here is a 94-residue protein sequence, read N- to C-terminus: Large ribosomal subunit protein bL25 (94 aa).

Belongs to the bacterial ribosomal protein bL25 family. As to quaternary structure, part of the 50S ribosomal subunit; part of the 5S rRNA/L5/L18/L25 subcomplex. Contacts the 5S rRNA. Binds to the 5S rRNA independently of L5 and L18.

Its function is as follows. This is one of the proteins that binds to the 5S RNA in the ribosome where it forms part of the central protuberance. This Shigella boydii serotype 18 (strain CDC 3083-94 / BS512) protein is Large ribosomal subunit protein bL25.